The primary structure comprises 154 residues: Jupiter microtubule associated homolog 1 (154 aa).

Methionine 1 bears the N-acetylmethionine mark. Residues 1-19 (MTTTTTFKGVDPNSRNSSR) show a composition bias toward polar residues. Positions 1 to 154 (MTTTTTFKGV…PGGKSSLVLG (154 aa)) are disordered. Position 2 is an N-acetylthreonine; in Hematological and neurological expressed 1 protein, N-terminally processed (threonine 2). A phosphoserine mark is found at serine 28 and serine 31. Threonine 54 carries the phosphothreonine modification. A phosphoserine mark is found at serine 71, serine 80, serine 87, serine 88, and serine 92. Positions 80-91 (SGPQRRNSSEAN) are enriched in polar residues. Residues 96 to 108 (LDLKGEGDVHENV) are compositionally biased toward basic and acidic residues. Residues 125–138 (PAAPVPSPVAPAPV) show a composition bias toward pro residues. Serine 131 is modified (phosphoserine). An N6-acetyllysine modification is found at lysine 148.

It belongs to the JUPITER family. As to quaternary structure, interacts with the complex composed, at least, of APC, CTNNB1 and GSK3B; the interaction takes place with the inactive form of GSK3B (phosphorylated at 'Ser-9').

Its subcellular location is the nucleus. The protein localises to the cytoplasm. Its function is as follows. Modulates negatively AKT-mediated GSK3B signaling. Induces CTNNB1 'Ser-33' phosphorylation and degradation through the suppression of the inhibitory 'Ser-9' phosphorylation of GSK3B, which represses the function of the APC:CTNNB1:GSK3B complex and the interaction with CDH1/E-cadherin in adherent junctions. Plays a role in the regulation of cell cycle and cell adhesion. Has an inhibitory role on AR-signaling pathway through the induction of receptor proteasomal degradation. This Bos taurus (Bovine) protein is Jupiter microtubule associated homolog 1.